The chain runs to 262 residues: Cytochrome c oxidase subunit 3 (262 aa).

6 helical membrane-spanning segments follow: residues 39–59, 83–103, 120–140, 163–183, 201–221, and 240–260; these read YTMT…YQWW, GMIL…WAFF, VGIA…ILLA, GLFF…YEYI, ATGF…ICFL, and AWYW…IYWW.

It belongs to the cytochrome c oxidase subunit 3 family. As to quaternary structure, component of the cytochrome c oxidase (complex IV, CIV), a multisubunit enzyme composed of a catalytic core of 3 subunits and several supernumerary subunits. The complex exists as a monomer or a dimer and forms supercomplexes (SCs) in the inner mitochondrial membrane with ubiquinol-cytochrome c oxidoreductase (cytochrome b-c1 complex, complex III, CIII).

Its subcellular location is the mitochondrion inner membrane. It carries out the reaction 4 Fe(II)-[cytochrome c] + O2 + 8 H(+)(in) = 4 Fe(III)-[cytochrome c] + 2 H2O + 4 H(+)(out). Its function is as follows. Component of the cytochrome c oxidase, the last enzyme in the mitochondrial electron transport chain which drives oxidative phosphorylation. The respiratory chain contains 3 multisubunit complexes succinate dehydrogenase (complex II, CII), ubiquinol-cytochrome c oxidoreductase (cytochrome b-c1 complex, complex III, CIII) and cytochrome c oxidase (complex IV, CIV), that cooperate to transfer electrons derived from NADH and succinate to molecular oxygen, creating an electrochemical gradient over the inner membrane that drives transmembrane transport and the ATP synthase. Cytochrome c oxidase is the component of the respiratory chain that catalyzes the reduction of oxygen to water. Electrons originating from reduced cytochrome c in the intermembrane space (IMS) are transferred via the dinuclear copper A center (CU(A)) of subunit 2 and heme A of subunit 1 to the active site in subunit 1, a binuclear center (BNC) formed by heme A3 and copper B (CU(B)). The BNC reduces molecular oxygen to 2 water molecules using 4 electrons from cytochrome c in the IMS and 4 protons from the mitochondrial matrix. In Anopheles gambiae (African malaria mosquito), this protein is Cytochrome c oxidase subunit 3 (COIII).